Consider the following 356-residue polypeptide: S-adenosylmethionine:tRNA ribosyltransferase-isomerase (356 aa).

Belongs to the QueA family. As to quaternary structure, monomer.

Its subcellular location is the cytoplasm. It catalyses the reaction 7-aminomethyl-7-carbaguanosine(34) in tRNA + S-adenosyl-L-methionine = epoxyqueuosine(34) in tRNA + adenine + L-methionine + 2 H(+). It participates in tRNA modification; tRNA-queuosine biosynthesis. Functionally, transfers and isomerizes the ribose moiety from AdoMet to the 7-aminomethyl group of 7-deazaguanine (preQ1-tRNA) to give epoxyqueuosine (oQ-tRNA). In Cronobacter sakazakii (strain ATCC BAA-894) (Enterobacter sakazakii), this protein is S-adenosylmethionine:tRNA ribosyltransferase-isomerase.